The sequence spans 1086 residues: Transcription initiation factor TFIID subunit 2 (1086 aa).

Residues M1–D11 show a composition bias toward polar residues. Disordered stretches follow at residues M1–V53 and G1064–Q1086. Composition is skewed to pro residues over residues P19–A36 and A44–V53. Over residues A1067–G1078 the composition is skewed to basic and acidic residues.

It belongs to the TAF2 family. As to quaternary structure, component of the TFIID basal transcription factor complex, composed of TATA-box-binding protein tbp-1, and a number of TBP-associated factors (TAFs).

The protein resides in the nucleus. The TFIID basal transcription factor complex plays a major role in the initiation of RNA polymerase II (Pol II)-dependent transcription. TFIID recognizes and binds promoters via its subunit tbp-1, a TATA-box-binding protein, and promotes assembly of the pre-initiation complex (PIC). The TFIID complex consists of tbp-1 and TBP-associated factors (TAFs), including taf-2. May regulate RNA polymerase II activity and thereby may control transcription initiation by RNA polymerase II. This Caenorhabditis elegans protein is Transcription initiation factor TFIID subunit 2.